Consider the following 680-residue polypeptide: DNA-directed RNA polymerase subunit beta' (680 aa).

Zn(2+) contacts are provided by Cys69, Cys71, Cys87, and Cys90. Asp489, Asp491, and Asp493 together coordinate Mg(2+).

It belongs to the RNA polymerase beta' chain family. RpoC1 subfamily. As to quaternary structure, in plastids the minimal PEP RNA polymerase catalytic core is composed of four subunits: alpha, beta, beta', and beta''. When a (nuclear-encoded) sigma factor is associated with the core the holoenzyme is formed, which can initiate transcription. Mg(2+) serves as cofactor. Zn(2+) is required as a cofactor.

Its subcellular location is the plastid. It localises to the chloroplast. The enzyme catalyses RNA(n) + a ribonucleoside 5'-triphosphate = RNA(n+1) + diphosphate. Its function is as follows. DNA-dependent RNA polymerase catalyzes the transcription of DNA into RNA using the four ribonucleoside triphosphates as substrates. This is DNA-directed RNA polymerase subunit beta' from Carica papaya (Papaya).